Here is a 408-residue protein sequence, read N- to C-terminus: CinA-like protein (408 aa).

It belongs to the CinA family.

This Fervidobacterium nodosum (strain ATCC 35602 / DSM 5306 / Rt17-B1) protein is CinA-like protein.